Reading from the N-terminus, the 579-residue chain is MENGRNWRNRELRQHVKVIDGTVSPTLLLKNATYLNVHTKQWLEANIWIYKDRIIYVGEKLPNQSQETEVYDCEGRFVVPGYIEPHAHPFQLANPEITAMHAAKTGTTTLVNDNLTWYLLTNKKKAFSIIDQFNKLPISMFWWSRYDSQTTLQEENHFINTNDVLDWINHPSVVQGGELTDWPSLLAGDDRLLYWIQETKRNGKPIEGHLPGASLRTLTKMKLLGISADHEAMTGKDVMNRLQLGYMVGLRYSPIRPDLPAILEELLESGLTTFDQLTFTMDGPTPYFMKDGVINTCIQIAIDKGIPLEDAYRMGSFHAAKHLRMDEELGSIAPGRIAHINILQEKENPNPIGVLAKGEWIVKETKEIDIPSIIDWSKYEINEMNIDWNLTEDDLQFSVPVGMDVVNDVIIKPYTIDSDVSFEELNEEKGEQFILLIDRKGKWRVNTIIRGFAPKLGALISSYSASGDIIIIGNSKKDIFIAWNRLKEIKGGIILVNNGEILTEIPLTLGGSLPNEPMEQMIKYDKQLKDTLQKYGFAFYDPVYSLLFLSAFHLPFFRITQKGLLDVKNRDILFPATMR.

The protein belongs to the metallo-dependent hydrolases superfamily. Adenine deaminase family.

The enzyme catalyses adenine + H2O + H(+) = hypoxanthine + NH4(+). This chain is Putative adenine deaminase OB0751, found in Oceanobacillus iheyensis (strain DSM 14371 / CIP 107618 / JCM 11309 / KCTC 3954 / HTE831).